The primary structure comprises 167 residues: HTH-type transcriptional repressor IacR (167 aa).

Residues 1-10 (MSNAKNTSAA) are compositionally biased toward polar residues. The interval 1–25 (MSNAKNTSAASPARKGHSHHDPASD) is disordered. The region spanning 30 to 162 (EDFPFYWLAR…LNRMLEVVFH (133 aa)) is the HTH marR-type domain. A DNA-binding region (H-T-H motif) is located at residues 76-99 (ISEISTHAIAKLSTITKIVYRMKE).

Exposure to indole-3-acetic acid (IAA) probably relieves the repressor activity. Probably acts as a repressor of iacA expression. This is HTH-type transcriptional repressor IacR from Pseudomonas putida (Arthrobacter siderocapsulatus).